We begin with the raw amino-acid sequence, 302 residues long: Deoxyhypusine hydroxylase-B (302 aa).

5 HEAT-like PBS-type repeats span residues 49-75, 82-108, 171-200, 204-230, and 237-263; these read LAHE…VLKD, VRHE…SLAV, MYER…LGVK, LRHE…VLKN, and VRHE…FAKD. 4 residues coordinate Fe cation: His51, Glu52, His84, and Glu85. Positions 206, 207, 239, and 240 each coordinate Fe cation.

This sequence belongs to the deoxyhypusine hydroxylase family. Fe(2+) is required as a cofactor.

It catalyses the reaction [eIF5A protein]-deoxyhypusine + AH2 + O2 = [eIF5A protein]-hypusine + A + H2O. It functions in the pathway protein modification; eIF5A hypusination. Functionally, catalyzes the hydroxylation of the N(6)-(4-aminobutyl)-L-lysine intermediate to form hypusine, an essential post-translational modification only found in mature eIF-5A factor. The sequence is that of Deoxyhypusine hydroxylase-B from Oryza sativa subsp. japonica (Rice).